The primary structure comprises 412 residues: Carboxypeptidase B1 (412 aa).

Positions 1–18 (MIPRIVVVLLSVLAVVTA) are cleaved as a signal peptide. The propeptide at 19–75 (RRSYEGYKVYGIVPESPDEAEILYQIRQSNPDLDFWHLTKQPGDEARVLVAPKDQRS) is activation peptide. The Peptidase M14 domain occupies 118-408 (SYLRHNEINE…VGIKAMALKV (291 aa)). Residues H175 and E178 each contribute to the Zn(2+) site. 175 to 178 (HARE) contacts a peptide. N-linked (GlcNAc...) asparagine glycosylation occurs at N205. A peptide contacts are provided by residues R230 and 246–247 (NR). A disulfide bond links C240 and C263. H299 is a Zn(2+) binding site. Residues 300 to 301 (SY) and Y351 contribute to the a peptide site. Catalysis depends on E374, which acts as the Proton donor/acceptor. Residue N395 is glycosylated (N-linked (GlcNAc...) asparagine).

The protein belongs to the peptidase M14 family. As to quaternary structure, monomer. Interacts with Dengue virus type 2 (DENV2, MY89-88549 strain) envelope protein E. Interacts with Dengue virus envelope protein E type 3, type 2, type 4 and type 1 with decreasing strength. Requires Zn(2+) as cofactor. Expressed in midgut (at protein level).

Its subcellular location is the endoplasmic reticulum. It catalyses the reaction Preferential release of a C-terminal lysine or arginine amino acid.. Inhibited by S.tuberosum metallocarboxypeptidase inhibitor. Functionally, carboxypeptidase that preferentially hydrolyzes arginine and lysine residues at the C-terminus. During infection by dengue virus, may play a role in preventing viral packaging, maturation, and release from the midgut. The sequence is that of Carboxypeptidase B1 from Aedes aegypti (Yellowfever mosquito).